Here is a 346-residue protein sequence, read N- to C-terminus: tRNA N6-adenosine threonylcarbamoyltransferase (346 aa).

The a divalent metal cation site is built by H117, H121, and Y138. Residues 138 to 142, D170, G185, and N277 contribute to the substrate site; that span reads YVSGG. An a divalent metal cation-binding site is contributed by D305.

The protein belongs to the KAE1 / TsaD family. As to quaternary structure, component of the EKC/KEOPS complex composed of at least SPAP27G11.07c/BUD32, cgi121, gon7, pgp2 and SPAC4H3.13/PCC1; the whole complex dimerizes. A divalent metal cation is required as a cofactor.

The protein localises to the cytoplasm. The protein resides in the nucleus. The enzyme catalyses L-threonylcarbamoyladenylate + adenosine(37) in tRNA = N(6)-L-threonylcarbamoyladenosine(37) in tRNA + AMP + H(+). In terms of biological role, component of the EKC/KEOPS complex that is required for the formation of a threonylcarbamoyl group on adenosine at position 37 (t(6)A37) in tRNAs that read codons beginning with adenine. The complex is probably involved in the transfer of the threonylcarbamoyl moiety of threonylcarbamoyl-AMP (TC-AMP) to the N6 group of A37. Pgp2 likely plays a direct catalytic role in this reaction, but requires other protein(s) of the complex to fulfill this activity. The EKC/KEOPS complex also promotes both telomere uncapping and telomere elongation. The complex is required for efficient recruitment of transcriptional coactivators. The sequence is that of tRNA N6-adenosine threonylcarbamoyltransferase (pgp2) from Schizosaccharomyces pombe (strain 972 / ATCC 24843) (Fission yeast).